The sequence spans 255 residues: Thiazole synthase (255 aa).

The active-site Schiff-base intermediate with DXP is the Lys96. 1-deoxy-D-xylulose 5-phosphate is bound by residues Gly157, 183 to 184 (AG), and 205 to 206 (NT).

It belongs to the ThiG family. Homotetramer. Forms heterodimers with either ThiH or ThiS.

It is found in the cytoplasm. The catalysed reaction is [ThiS sulfur-carrier protein]-C-terminal-Gly-aminoethanethioate + 2-iminoacetate + 1-deoxy-D-xylulose 5-phosphate = [ThiS sulfur-carrier protein]-C-terminal Gly-Gly + 2-[(2R,5Z)-2-carboxy-4-methylthiazol-5(2H)-ylidene]ethyl phosphate + 2 H2O + H(+). The protein operates within cofactor biosynthesis; thiamine diphosphate biosynthesis. In terms of biological role, catalyzes the rearrangement of 1-deoxy-D-xylulose 5-phosphate (DXP) to produce the thiazole phosphate moiety of thiamine. Sulfur is provided by the thiocarboxylate moiety of the carrier protein ThiS. In vitro, sulfur can be provided by H(2)S. The protein is Thiazole synthase of Staphylococcus epidermidis (strain ATCC 12228 / FDA PCI 1200).